The following is a 201-amino-acid chain: Small ribosomal subunit protein uS4 (201 aa).

Positions 91–154 constitute an S4 RNA-binding domain; it reads SRLDNVIYRA…QKMEWFEEAQ (64 aa).

It belongs to the universal ribosomal protein uS4 family. As to quaternary structure, part of the 30S ribosomal subunit. Contacts protein S5. The interaction surface between S4 and S5 is involved in control of translational fidelity.

In terms of biological role, one of the primary rRNA binding proteins, it binds directly to 16S rRNA where it nucleates assembly of the body of the 30S subunit. Its function is as follows. With S5 and S12 plays an important role in translational accuracy. The sequence is that of Small ribosomal subunit protein uS4 from Corynebacterium aurimucosum (strain ATCC 700975 / DSM 44827 / CIP 107346 / CN-1) (Corynebacterium nigricans).